We begin with the raw amino-acid sequence, 57 residues long: Large ribosomal subunit protein bL32c (57 aa).

The protein belongs to the bacterial ribosomal protein bL32 family.

Its subcellular location is the plastid. The protein resides in the chloroplast. The chain is Large ribosomal subunit protein bL32c from Drimys granadensis.